Here is a 159-residue protein sequence, read N- to C-terminus: NAD(P)H-quinone oxidoreductase subunit N (159 aa).

The protein belongs to the complex I NdhN subunit family. As to quaternary structure, NDH-1 can be composed of about 15 different subunits; different subcomplexes with different compositions have been identified which probably have different functions.

The protein localises to the cell inner membrane. The enzyme catalyses a plastoquinone + NADH + (n+1) H(+)(in) = a plastoquinol + NAD(+) + n H(+)(out). It carries out the reaction a plastoquinone + NADPH + (n+1) H(+)(in) = a plastoquinol + NADP(+) + n H(+)(out). In terms of biological role, NDH-1 shuttles electrons from an unknown electron donor, via FMN and iron-sulfur (Fe-S) centers, to quinones in the respiratory and/or the photosynthetic chain. The immediate electron acceptor for the enzyme in this species is believed to be plastoquinone. Couples the redox reaction to proton translocation, and thus conserves the redox energy in a proton gradient. Cyanobacterial NDH-1 also plays a role in inorganic carbon-concentration. This Gloeobacter violaceus (strain ATCC 29082 / PCC 7421) protein is NAD(P)H-quinone oxidoreductase subunit N.